The sequence spans 305 residues: Dermonecrotic toxin LiSicTox-betaID1 (305 aa).

The first 18 residues, 1-18 (MQLFIILCLAGSAVQLEG), serve as a signal peptide directing secretion. Positions 19–26 (TELDGVER) are excised as a propeptide. The active site involves His-38. Mg(2+) contacts are provided by Glu-58 and Asp-60. Residue His-74 is the Nucleophile of the active site. 2 disulfide bridges follow: Cys-78-Cys-84 and Cys-80-Cys-223. Mg(2+) is bound at residue Asp-118.

It belongs to the arthropod phospholipase D family. Class II subfamily. Class IIb sub-subfamily. Mg(2+) serves as cofactor. Expressed by the venom gland.

The protein localises to the secreted. It carries out the reaction an N-(acyl)-sphingosylphosphocholine = an N-(acyl)-sphingosyl-1,3-cyclic phosphate + choline. The catalysed reaction is an N-(acyl)-sphingosylphosphoethanolamine = an N-(acyl)-sphingosyl-1,3-cyclic phosphate + ethanolamine. The enzyme catalyses a 1-acyl-sn-glycero-3-phosphocholine = a 1-acyl-sn-glycero-2,3-cyclic phosphate + choline. It catalyses the reaction a 1-acyl-sn-glycero-3-phosphoethanolamine = a 1-acyl-sn-glycero-2,3-cyclic phosphate + ethanolamine. Its function is as follows. Dermonecrotic toxins cleave the phosphodiester linkage between the phosphate and headgroup of certain phospholipids (sphingolipid and lysolipid substrates), forming an alcohol (often choline) and a cyclic phosphate. This toxin acts on sphingomyelin (SM) with low activity. It may also act on ceramide phosphoethanolamine (CPE), lysophosphatidylcholine (LPC) and lysophosphatidylethanolamine (LPE), but not on lysophosphatidylserine (LPS), and lysophosphatidylglycerol (LPG). It acts by transphosphatidylation, releasing exclusively cyclic phosphate products as second products. Has no or weak activities in inducing dermonecrosis, hemolysis, inflammatory response, platelet aggregation and increase in vessel permeability. In vivo, shows no lethality when injected at higher dose into mice. The protein is Dermonecrotic toxin LiSicTox-betaID1 of Loxosceles intermedia (Brown spider).